The sequence spans 1072 residues: MTSLLGLAVRLLLFQPTLMFWASQVRQKCHNGTYEISVLMMDNSAYKEPLQNLRDAVEEGLDIVRKRLREAELNVTVNATFIYSDGLIHKSGDCRSSTCEGLDLLREITRDRKMGCVLMGPSCTYSTFQMYLDTELNYPMISAGSFGLSCDYKETLTRILPPARKLMYFLVDFWKVNNAPFKTFSWNSSYVYKNGSEPEDCFWYLNALEAGVSYFSEVLSFKDVLRRSEQFQEILMGRNRKSNVIVMCGTPETFYNVKGDLKVADDTVVILVDLFSNHYFEDDTRAPEYMDNVLVLTLPPEKFIANASVSGRFPSERSDFSLAYLEGTLLFGHMLQTFLENGESVTTPKFARAFRNLTFQGLEGPVTLDDSGDIDNIMCLLYVSLDTRKYKVLMAYDTHKNQTIPVATSPNFIWKNHRLPNDVPGLGPQILMIAVFTLTGIVVVLLLIALLVLRKYRRDHELRQKKWSHIPSENIFPLETNETNHVSLKIDDDRRRDTIQRVRQCKYDKKKVILKDLKHCDGNFSEKQKIELNKLLQSDYYNLTKFYGTVKLDTRIFGVVEYCERGSLREVLNDTISYPDGTFMDWEFKISVLNDIAKGMSYLHSSKIEVHGRLKSTNCVVDSRMVVKITDFGCNSILPPKKDLWTAPEHLRQATISQKGDVYSFSIIAQEIILRKETFYTLSCRDQNEKIFRVENSYGTKPFRPDLFLETADEKELEVYLLVKSCWEEDPEKRPDFKKIESTLAKIFGLFHDQKNESYMDTLIRRLQLYSRNLEHLVEERTQLYKAERDRADHLNFMLLPRLVVKSLKEKGIVEPELYEEVTIYFSDIVGFTTICKYSTPMEVVDMLNDIYKSFDQIVDHHDVYKVETIGDAYVVASGLPMRNGNRHAVDISKMALDILSFMGTFELEHLPGLPVWIRIGVHSGPCAAGVVGIKMPRYCLFGDTVNTASRMESTGLPLRIHMSSSTIAILRRTDCQFLYEVRGETYLKGRGTETTYWLTGMKDQEYNLPTPPTVENQQRLQTEFSDMIVSALQKRQASGVKSRRPTRVASYKKGFLEYMQLNNSDHDSTYF.

Positions 1 to 22 (MTSLLGLAVRLLLFQPTLMFWA) are cleaved as a signal peptide. Topologically, residues 23–429 (SQVRQKCHNG…PNDVPGLGPQ (407 aa)) are extracellular. Residues asparagine 31, asparagine 74, asparagine 78, asparagine 187, asparagine 194, asparagine 306, and asparagine 401 are each glycosylated (N-linked (GlcNAc...) asparagine). The chain crosses the membrane as a helical span at residues 430–453 (ILMIAVFTLTGIVVVLLLIALLVL). Topologically, residues 454-1072 (RKYRRDHELR…NNSDHDSTYF (619 aa)) are cytoplasmic. The Protein kinase domain maps to 488–748 (LKIDDDRRRD…KIESTLAKIF (261 aa)). A Guanylate cyclase domain is found at 823–953 (TIYFSDIVGF…DTVNTASRME (131 aa)).

This sequence belongs to the adenylyl cyclase class-4/guanylyl cyclase family. In terms of assembly, homotrimer. Interacts via its C-terminal region with PDZK2. Interacts with the lectin chaperone VIP36. In terms of processing, glycosylation at Asn-74 and/or Asn-78 is required for interaction with VIP36 while glycosylation at Asn-401 modulates ligand-mediated GC-C activation.

Its subcellular location is the cell membrane. The protein localises to the endoplasmic reticulum membrane. It catalyses the reaction GTP = 3',5'-cyclic GMP + diphosphate. Functionally, guanylyl cyclase that catalyzes synthesis of cyclic GMP (cGMP) from GTP. Receptor for the E.coli heat-stable enterotoxin; E.coli enterotoxin markedly stimulates the accumulation of cGMP in mammalian cells expressing GUCY2C. This is Guanylyl cyclase C (Gucy2c) from Rattus norvegicus (Rat).